The chain runs to 662 residues: Primary amine oxidase 2 (662 aa).

Positions 1–22 (MSQLLLFTILVFSSVFVIGSLS) are cleaved as a signal peptide. A glycan (N-linked (GlcNAc...) asparagine) is linked at asparagine 154. 321–332 (FFDCGEFGCGQY) is a substrate binding site. Aspartate 323 (proton acceptor) is an active-site residue. An intrachain disulfide couples cysteine 342 to cysteine 368. Residue 405–410 (VGNYDY) coordinates substrate. Tyrosine 408 (schiff-base intermediate with substrate; via topaquinone) is an active-site residue. Tyrosine 408 bears the 2',4',5'-topaquinone mark. Cu cation is bound by residues histidine 464 and histidine 466. 2 residues coordinate Mn(2+): aspartate 473 and aspartate 475. An N-linked (GlcNAc...) asparagine glycan is attached at asparagine 568. Positions 602 and 603 each coordinate Mn(2+). Histidine 613 is a Cu cation binding site.

The protein belongs to the copper/topaquinone oxidase family. Homodimer. Requires Cu cation as cofactor. The cofactor is Mn(2+). L-topaquinone serves as cofactor. Topaquinone (TPQ) is generated by copper-dependent autoxidation of a specific tyrosyl residue.

The enzyme catalyses a primary methyl amine + O2 + H2O = an aldehyde + H2O2 + NH4(+). This chain is Primary amine oxidase 2, found in Arabidopsis thaliana (Mouse-ear cress).